Consider the following 299-residue polypeptide: Bifunctional protein FolD (299 aa).

NADP(+) is bound by residues 168–170 (GRS), serine 193, and isoleucine 234.

Belongs to the tetrahydrofolate dehydrogenase/cyclohydrolase family. Homodimer.

The enzyme catalyses (6R)-5,10-methylene-5,6,7,8-tetrahydrofolate + NADP(+) = (6R)-5,10-methenyltetrahydrofolate + NADPH. It catalyses the reaction (6R)-5,10-methenyltetrahydrofolate + H2O = (6R)-10-formyltetrahydrofolate + H(+). It participates in one-carbon metabolism; tetrahydrofolate interconversion. Functionally, catalyzes the oxidation of 5,10-methylenetetrahydrofolate to 5,10-methenyltetrahydrofolate and then the hydrolysis of 5,10-methenyltetrahydrofolate to 10-formyltetrahydrofolate. The protein is Bifunctional protein FolD of Bartonella tribocorum (strain CIP 105476 / IBS 506).